A 467-amino-acid chain; its full sequence is Cysteine--tRNA ligase (467 aa).

Cys-29 serves as a coordination point for Zn(2+). Positions 31–41 match the 'HIGH' region motif; that stretch reads ATVQGEPHIGH. Cys-207, His-232, and Glu-236 together coordinate Zn(2+). Residues 263–267 carry the 'KMSKS' region motif; that stretch reads KMSKS. Position 266 (Lys-266) interacts with ATP. The tract at residues 446-467 is disordered; that stretch reads IDVTDTPNGPEWSLRTARGKAN.

Belongs to the class-I aminoacyl-tRNA synthetase family. As to quaternary structure, monomer. It depends on Zn(2+) as a cofactor.

It localises to the cytoplasm. The enzyme catalyses tRNA(Cys) + L-cysteine + ATP = L-cysteinyl-tRNA(Cys) + AMP + diphosphate. This is Cysteine--tRNA ligase from Nocardia farcinica (strain IFM 10152).